Reading from the N-terminus, the 533-residue chain is Frizzled/smoothened-like sans CRD protein H (533 aa).

The N-terminal stretch at 1-21 is a signal peptide; the sequence is MFIKFYFFIIFLILNFKNNYA. Topologically, residues 22–103 are extracellular; the sequence is SPTLLDSVLS…GDWTTMMDMS (82 aa). The N-linked (GlcNAc...) asparagine glycan is linked to Asn-76. Residues 104 to 124 form a helical membrane-spanning segment; that stretch reads LIVATISFFASIFLILTYSPL. Over 125–134 the chain is Cytoplasmic; it reads MNPSYNNRHT. A helical transmembrane segment spans residues 135–155; sequence IGILSMSFGIFLIMFTDMYNL. The Extracellular portion of the chain corresponds to 156 to 177; the sequence is KKRFTLGCPSETRYAIQNDADC. A helical transmembrane segment spans residues 178-198; sequence LITGLIFQFGCVSAVFFWTAL. Residues 199–216 are Cytoplasmic-facing; that stretch reads SLDLYFQITNRNISRKYD. Residues 217-237 traverse the membrane as a helical segment; sequence LYYFIGVNLISLIFTFVPVIS. Topologically, residues 238-259 are extracellular; sequence KSYGYGDFALGCWILDFNYALG. The helical transmembrane segment at 260-280 threads the bilayer; sequence CFWIPLSVCLIFSTVVVLMIL. Residues 281–302 lie on the Cytoplasmic side of the membrane; the sequence is YEVYKIYKASNQKTSLKGHIKP. Residues 303-323 form a helical membrane-spanning segment; the sequence is LLCLISNCFEFFYVFGYSLYL. The Extracellular segment spans residues 324–360; that stretch reads ATKLTELHDNMDAYIKCLFLNSQNDPDSYTCPDHRLK. A helical membrane pass occupies residues 361-381; the sequence is LGPQFLFFLSLRLLGVSGIVF. Topologically, residues 382 to 533 are cytoplasmic; that stretch reads YGTNSKVRKI…LTNINTIDNV (152 aa). The interval 454–533 is disordered; sequence IIVTPGGDDD…LTNINTIDNV (80 aa). A compositionally biased stretch (low complexity) spans 466 to 518; the sequence is NNNNNNNNNNNNNNNNNNNNNNNNNNNNNNNNNNNNNNNNNNNNNSNENNENN. The stretch at 501–528 forms a coiled coil; sequence NNNNNNNNNNSNENNENNTQEIELTNIN. Residues 519–533 are compositionally biased toward polar residues; the sequence is TQEIELTNINTIDNV.

It belongs to the G-protein coupled receptor Fz/Smo family.

It is found in the membrane. This chain is Frizzled/smoothened-like sans CRD protein H (fscH), found in Dictyostelium discoideum (Social amoeba).